Here is a 306-residue protein sequence, read N- to C-terminus: Putative S-adenosyl-L-methionine-dependent methyltransferase MAV_4442 (306 aa).

Residues Asp129 and 158–159 (DL) each bind S-adenosyl-L-methionine.

It belongs to the UPF0677 family.

Its function is as follows. Exhibits S-adenosyl-L-methionine-dependent methyltransferase activity. The polypeptide is Putative S-adenosyl-L-methionine-dependent methyltransferase MAV_4442 (Mycobacterium avium (strain 104)).